The primary structure comprises 162 residues: FCS-Like Zinc finger 6 (162 aa).

Disordered stretches follow at residues 25–47 (NLPS…YGSN) and 121–162 (RQEQ…AAAV). Polar residues predominate over residues 27-47 (PSESEPSNQQKPTVASPYGSN). The segment at 88 to 132 (HFLRSCALCERLLVPGRDIYMYRGDKAFCSSECRQEQMAQDERKE) adopts an FLZ-type zinc-finger fold. The span at 147 to 162 (APARAKPGKGRAAAAV) shows a compositional bias: low complexity.

This sequence belongs to the FLZ family. Interacts with KIN10 and KIN11 via its FLZ-type zinc finger domain. Early expressed in hypocotyl and cotyledon. Later expressed in old or senescing leaves and in pistil, pollen and filament of open flowers.

It is found in the nucleus. The protein resides in the cytoplasm. Its subcellular location is the endoplasmic reticulum. May act as an adapter to facilitate the interaction of SnRK1 complex with effector proteins, conferring tissue- and stimulus-type specific differences in the SnRK1 regulation pathway. Negatively regulates KIN10 leading to a repression of the SnRK1 signaling pathway. The chain is FCS-Like Zinc finger 6 from Arabidopsis thaliana (Mouse-ear cress).